A 392-amino-acid chain; its full sequence is Major outer membrane protein P.IA (392 aa).

Residues 1–19 form the signal peptide; it reads MRKKLTALVLSALPLAAVA.

The protein belongs to the Gram-negative porin family. Homotrimer.

Its subcellular location is the cell outer membrane. In terms of biological role, serves as a slightly cation selective porin. Major antigen on the gonococcal cell surface and it may have pathogenic properties in addition to its porin activity. This chain is Major outer membrane protein P.IA (porA), found in Neisseria meningitidis serogroup B / serotype 15 (strain H44/76).